We begin with the raw amino-acid sequence, 601 residues long: Glutathione-regulated potassium-efflux system protein KefB (601 aa).

13 consecutive transmembrane segments (helical) span residues 4-24 (ADLL…VPLA), 29-49 (IGAV…GLGF), 55-75 (EILH…GLEL), 87-107 (IFGV…GLLM), 111-131 (FLWQ…TAMA), 152-172 (VLLF…LLAG), 177-197 (HFDW…LIGG), 207-227 (FIAA…LVLS), 230-250 (LFMD…GVLL), 262-282 (AIDP…GMSL), 284-304 (LGVL…LVVI), 324-344 (MQFA…FSTA), and 356-376 (ALLL…MKGI). Positions 400–519 (KPQVIVVGFG…AGVTQFSRET (120 aa)) constitute an RCK N-terminal domain.

This sequence belongs to the monovalent cation:proton antiporter 2 (CPA2) transporter (TC 2.A.37) family. KefB subfamily. As to quaternary structure, interacts with the regulatory subunit KefG.

The protein localises to the cell inner membrane. In terms of biological role, pore-forming subunit of a potassium efflux system that confers protection against electrophiles. Catalyzes K(+)/H(+) antiport. The sequence is that of Glutathione-regulated potassium-efflux system protein KefB from Salmonella paratyphi A (strain ATCC 9150 / SARB42).